We begin with the raw amino-acid sequence, 192 residues long: Chromophore lyase CpcS/CpeS 2 (192 aa).

This sequence belongs to the CpcS/CpeS biliprotein lyase family.

In terms of biological role, covalently attaches a chromophore to Cys residue(s) of phycobiliproteins. This Synechocystis sp. (strain ATCC 27184 / PCC 6803 / Kazusa) protein is Chromophore lyase CpcS/CpeS 2.